Here is a 426-residue protein sequence, read N- to C-terminus: 3-phosphoshikimate 1-carboxyvinyltransferase (426 aa).

Residues lysine 20, serine 21, and arginine 25 each coordinate 3-phosphoshikimate. Residue lysine 20 coordinates phosphoenolpyruvate. Residues glycine 92 and arginine 120 each coordinate phosphoenolpyruvate. Residues serine 166, glutamine 168, aspartate 312, and lysine 339 each contribute to the 3-phosphoshikimate site. Glutamine 168 is a binding site for phosphoenolpyruvate. The Proton acceptor role is filled by aspartate 312. Positions 343 and 385 each coordinate phosphoenolpyruvate.

Belongs to the EPSP synthase family. In terms of assembly, monomer.

Its subcellular location is the cytoplasm. The catalysed reaction is 3-phosphoshikimate + phosphoenolpyruvate = 5-O-(1-carboxyvinyl)-3-phosphoshikimate + phosphate. It participates in metabolic intermediate biosynthesis; chorismate biosynthesis; chorismate from D-erythrose 4-phosphate and phosphoenolpyruvate: step 6/7. Functionally, catalyzes the transfer of the enolpyruvyl moiety of phosphoenolpyruvate (PEP) to the 5-hydroxyl of shikimate-3-phosphate (S3P) to produce enolpyruvyl shikimate-3-phosphate and inorganic phosphate. The sequence is that of 3-phosphoshikimate 1-carboxyvinyltransferase from Enterococcus faecalis (strain ATCC 700802 / V583).